The primary structure comprises 332 residues: Phosphoenolpyruvate transferase (332 aa).

7,8-didemethyl-8-hydroxy-5-deazariboflavin is bound at residue aspartate 63.

Belongs to the CofD family. Homodimer. It depends on Mg(2+) as a cofactor.

The catalysed reaction is enolpyruvoyl-2-diphospho-5'-guanosine + 7,8-didemethyl-8-hydroxy-5-deazariboflavin = dehydro coenzyme F420-0 + GMP + H(+). It functions in the pathway cofactor biosynthesis; coenzyme F420 biosynthesis. In terms of biological role, catalyzes the transfer of the phosphoenolpyruvate moiety from enoylpyruvoyl-2-diphospho-5'-guanosine (EPPG) to 7,8-didemethyl-8-hydroxy-5-deazariboflavin (FO) with the formation of dehydro coenzyme F420-0 and GMP. This Nocardia farcinica (strain IFM 10152) protein is Phosphoenolpyruvate transferase.